We begin with the raw amino-acid sequence, 598 residues long: MTISLARYNFFISLELLKTLVAKGVKYFVLCPGSRSGPLALAAASLSKRKELTLITSIDERSAAFLALGISAASGQVSCVITTSGSAVANLLPAAVEADRSCHPLLFLTADRPLRLKECGANQAVNQQDFLKSVCRHFDESPKEGIHLISKERLTSLVGKSFEMASNIPGPVHINLAYEEPLHPCELDQKKVLDGWVIEGFLKGKITPTKDEVVKSFQSLKLLKLDPFSLGIIIVGPWRGKVKQLNSFRGALKKWQKLTGWPILADPLSGVENDQEGLINHWDLFFSIGLFEKIKEIQVLRLGPIPPSRELQTWLKKPGKFQLLITEGDSRNLDPIGGSTQFSEGFSCWVDKMLEVIPVKPAIDKKIVSKKLIKELIKYDLFIHDWLDKRLFRNGLITEPALARLLPRLLPESIPVMIASSSPIRDWLSYSGEGAFLRRCFGFRGASGIDGTLSMGMGLSIIMGRMVLVTGDLALLHDTNGWLFSKDKNISLIVIMIDNGGGGIFNQLNIDRIEEGDFEDIFLMPQQVCHLTLAKAYGLKYKQVACLDDLEKAIEWSFSLSTNVLIRVCTNSIEDHRLRVNLSDDLKKTLSENLSSFD.

Belongs to the TPP enzyme family. MenD subfamily. As to quaternary structure, homodimer. Requires Mg(2+) as cofactor. The cofactor is Mn(2+). It depends on thiamine diphosphate as a cofactor.

The enzyme catalyses isochorismate + 2-oxoglutarate + H(+) = 5-enolpyruvoyl-6-hydroxy-2-succinyl-cyclohex-3-ene-1-carboxylate + CO2. The protein operates within quinol/quinone metabolism; 1,4-dihydroxy-2-naphthoate biosynthesis; 1,4-dihydroxy-2-naphthoate from chorismate: step 2/7. It functions in the pathway cofactor biosynthesis; phylloquinone biosynthesis. In terms of biological role, catalyzes the thiamine diphosphate-dependent decarboxylation of 2-oxoglutarate and the subsequent addition of the resulting succinic semialdehyde-thiamine pyrophosphate anion to isochorismate to yield 2-succinyl-5-enolpyruvyl-6-hydroxy-3-cyclohexene-1-carboxylate (SEPHCHC). This Prochlorococcus marinus (strain NATL2A) protein is 2-succinyl-5-enolpyruvyl-6-hydroxy-3-cyclohexene-1-carboxylate synthase.